Consider the following 871-residue polypeptide: Protein arg-6, mitochondrial (871 aa).

The N-terminal 44 residues, 1 to 44 (MYSACAVALRAGARRVVRRVPKSARALPRAAAARRQISTTAARS), are a transit peptide targeting the mitochondrion. Positions 336–488 (QASTSLSEFK…DFTENGRAML (153 aa)) constitute an N-acetyltransferase domain. Residue cysteine 689 is part of the active site.

In the N-terminal section; belongs to the acetylglutamate kinase family. It in the C-terminal section; belongs to the NAGSA dehydrogenase family. Post-translationally, the protein precursor is cleaved into the two biologically active enzymes, the kinase and the reductase.

The protein resides in the mitochondrion. It catalyses the reaction N-acetyl-L-glutamate 5-semialdehyde + phosphate + NADP(+) = N-acetyl-L-glutamyl 5-phosphate + NADPH + H(+). The catalysed reaction is N-acetyl-L-glutamate + ATP = N-acetyl-L-glutamyl 5-phosphate + ADP. It participates in amino-acid biosynthesis; L-arginine biosynthesis; N(2)-acetyl-L-ornithine from L-glutamate: step 2/4. Its pathway is amino-acid biosynthesis; L-arginine biosynthesis; N(2)-acetyl-L-ornithine from L-glutamate: step 3/4. The protein is Protein arg-6, mitochondrial (arg-6) of Neurospora crassa (strain ATCC 24698 / 74-OR23-1A / CBS 708.71 / DSM 1257 / FGSC 987).